A 215-amino-acid polypeptide reads, in one-letter code: Large ribosomal subunit protein uL3 (215 aa).

A compositionally biased stretch (low complexity) spans 131–144 (SSSRASHGNSRSHN). The segment at 131–150 (SSSRASHGNSRSHNVPGSIG) is disordered. N5-methylglutamine is present on glutamine 153.

Belongs to the universal ribosomal protein uL3 family. As to quaternary structure, part of the 50S ribosomal subunit. Forms a cluster with proteins L14 and L19. In terms of processing, methylated by PrmB.

In terms of biological role, one of the primary rRNA binding proteins, it binds directly near the 3'-end of the 23S rRNA, where it nucleates assembly of the 50S subunit. This chain is Large ribosomal subunit protein uL3, found in Nitrosomonas europaea (strain ATCC 19718 / CIP 103999 / KCTC 2705 / NBRC 14298).